We begin with the raw amino-acid sequence, 64 residues long: Ferredoxin-like protein in nif region (64 aa).

Residues 2 to 30 (AFKIIASQCTQCGACEFECPSGAISFKTD) form the 4Fe-4S ferredoxin-type domain. 8 residues coordinate [4Fe-4S] cluster: Cys-10, Cys-13, Cys-16, Cys-20, Cys-39, Cys-42, Cys-51, and Cys-55.

Requires [4Fe-4S] cluster as cofactor.

The sequence is that of Ferredoxin-like protein in nif region (fdxN) from Rhizobium leguminosarum bv. trifolii.